The sequence spans 713 residues: Low-density lipoprotein receptor-related protein 10 (713 aa).

An N-terminal signal peptide occupies residues 1-17 (MLSALPLLFLLLGGALA). Residues 18–441 (RPDRITFPRS…WDCSYALPRK (424 aa)) lie on the Extracellular side of the membrane. 2 disulfides stabilise this stretch: cysteine 29–cysteine 58 and cysteine 81–cysteine 99. A CUB 1 domain is found at 29–137 (CEAPPAVLSE…QGFLLTYSQD (109 aa)). An N-linked (GlcNAc...) asparagine glycan is attached at asparagine 57. Asparagine 112 is a glycosylation site (N-linked (GlcNAc...) asparagine). One can recognise an LDL-receptor class A 1 domain in the interval 140–176 (LCLQEEFQCLNHRCIPAAQRCDGIDACGDGSDEAGCS). Disulfide bonds link cysteine 141-cysteine 153, cysteine 148-cysteine 166, cysteine 160-cysteine 175, and cysteine 193-cysteine 221. The CUB 2 domain occupies 193–306 (CNLTLEDFYG…RGFNATYHVR (114 aa)). Asparagine 194 and asparagine 300 each carry an N-linked (GlcNAc...) asparagine glycan. 3 LDL-receptor class A domains span residues 308-355 (YCLP…EGCP), 356-398 (GCPP…RRCR), and 399-435 (HCQP…WDCS). Intrachain disulfides connect cysteine 309–cysteine 332, cysteine 316–cysteine 345, cysteine 339–cysteine 354, cysteine 357–cysteine 375, cysteine 364–cysteine 388, cysteine 382–cysteine 397, cysteine 400–cysteine 412, cysteine 407–cysteine 425, and cysteine 419–cysteine 434. Residues 442-462 (VITAAVIGSLVCGLLLVIALG) form a helical membrane-spanning segment. Topologically, residues 463 to 713 (CTCKLYAIRT…VEAEDEPLLA (251 aa)) are cytoplasmic. The interval 566-636 (LLPRTNTPAR…TLPALATVSE (71 aa)) is disordered. A Phosphothreonine modification is found at threonine 596. The segment covering 614-626 (PPLPIKTPIPTPS) has biased composition (pro residues).

Belongs to the LDLR family. Highly expressed in heart, lung, liver and liver. Expressed at low level in brain and spleen. Weakly or not expressed in testis and skeletal muscle. In liver, it is expressed in hepatocytes and at higher level in sinusoidal lining. In the kidney, it is expressed in peritubular capillaries. In brain, it is expressed in the epithelium of the choroid plexus ependymal cells of the third ventricle pia matter, and to lesser extent in hippocampal fields CA2 and CA3.

It localises to the membrane. The protein resides in the coated pit. Functionally, probable receptor, which is involved in the internalization of lipophilic molecules and/or signal transduction. May be involved in the uptake of lipoprotein APOE in liver. This Mus musculus (Mouse) protein is Low-density lipoprotein receptor-related protein 10 (Lrp10).